The chain runs to 228 residues: L-ribulose-5-phosphate 4-epimerase UlaF (228 aa).

Residues 26 to 27 (GN), 43 to 44 (SG), and 72 to 73 (SS) contribute to the substrate site. Zn(2+)-binding residues include D74, H93, and H95. Residue D118 is the Proton donor/acceptor of the active site. H167 lines the Zn(2+) pocket. Y225 serves as the catalytic Proton donor/acceptor.

The protein belongs to the aldolase class II family. AraD/FucA subfamily. Requires Zn(2+) as cofactor.

It carries out the reaction L-ribulose 5-phosphate = D-xylulose 5-phosphate. It functions in the pathway cofactor degradation; L-ascorbate degradation; D-xylulose 5-phosphate from L-ascorbate: step 4/4. Catalyzes the isomerization of L-ribulose 5-phosphate to D-xylulose 5-phosphate. Is involved in the anaerobic L-ascorbate utilization. This is L-ribulose-5-phosphate 4-epimerase UlaF from Escherichia coli O7:K1 (strain IAI39 / ExPEC).